A 112-amino-acid chain; its full sequence is Lutropin subunit beta (112 aa).

Disulfide bonds link Cys-4-Cys-52, Cys-18-Cys-67, Cys-21-Cys-105, Cys-29-Cys-83, Cys-33-Cys-85, and Cys-88-Cys-95. Residue Asn-8 is glycosylated (N-linked (GlcNAc...) asparagine).

The protein belongs to the glycoprotein hormones subunit beta family. As to quaternary structure, heterodimer of a common alpha chain and a unique beta chain which confers biological specificity to thyrotropin, lutropin, follitropin and gonadotropin.

The protein localises to the secreted. The sequence is that of Lutropin subunit beta (lhb) from Aquarana catesbeiana (American bullfrog).